The chain runs to 164 residues: Phosphopantetheine adenylyltransferase (164 aa).

Residue Ser-9 participates in substrate binding. ATP contacts are provided by residues 9–10 (SF) and His-17. Substrate is bound by residues Lys-41, Val-78, and Arg-92. ATP contacts are provided by residues 93 to 95 (GLR), Glu-103, and 128 to 134 (SRPITAT).

It belongs to the bacterial CoaD family. Homohexamer. Mg(2+) is required as a cofactor.

It is found in the cytoplasm. The catalysed reaction is (R)-4'-phosphopantetheine + ATP + H(+) = 3'-dephospho-CoA + diphosphate. It functions in the pathway cofactor biosynthesis; coenzyme A biosynthesis; CoA from (R)-pantothenate: step 4/5. Reversibly transfers an adenylyl group from ATP to 4'-phosphopantetheine, yielding dephospho-CoA (dPCoA) and pyrophosphate. This chain is Phosphopantetheine adenylyltransferase, found in Agrobacterium fabrum (strain C58 / ATCC 33970) (Agrobacterium tumefaciens (strain C58)).